Consider the following 837-residue polypeptide: Putative dimethyl sulfoxide reductase catalytic subunit A (837 aa).

Positions 1-36 (MSDTDLNATRRDVLKSGAVAAVGLSGGGLLSTLQEA) form a signal peptide, tat-type signal. Positions 53-110 (DQVVKTACSPNCRGKCPLDVFVRDGQIKKVEQQVPAAKTFKRGCTLGMTHLQRVYNAD) constitute a 4Fe-4S Mo/W bis-MGD-type domain. Positions 60, 64, 68, and 96 each coordinate [4Fe-4S] cluster. Mo-bis(molybdopterin guanine dinucleotide) is bound at residue asparagine 200. The interval 813 to 837 (EHQSNEYTQHNPRGSSGTATDGDSS) is disordered. Low complexity predominate over residues 826–837 (GSSGTATDGDSS).

It belongs to the prokaryotic molybdopterin-containing oxidoreductase family. In terms of assembly, probable multiprotein complex that likely consists of DmsA, DmsB and DmsC. Mo-bis(molybdopterin guanine dinucleotide) is required as a cofactor. The cofactor is [4Fe-4S] cluster. Predicted to be exported by the Tat system. The position of the signal peptide cleavage has not been experimentally proven.

Its subcellular location is the cell membrane. The catalysed reaction is dimethyl sulfide + a menaquinone + H2O = dimethyl sulfoxide + a menaquinol. Functionally, dimethyl sulfoxide (DMSO) reductase catalyzes the reduction of dimethyl sulfoxide (DMSO) to dimethyl sulfide (DMS) during anaerobic respiration; it can also use trimethylamine N-oxide (TMAO) as terminal electron acceptor. Required for anaerobic respiration on DMSO and TMAO; subunit A is proposed to be catalytically active. In Halobacterium salinarum (strain ATCC 700922 / JCM 11081 / NRC-1) (Halobacterium halobium), this protein is Putative dimethyl sulfoxide reductase catalytic subunit A (dmsA).